The primary structure comprises 512 residues: GMP synthase [glutamine-hydrolyzing] (512 aa).

The region spanning 9–198 (GVLVVDFGGQ…WLSLVGAPRT (190 aa)) is the Glutamine amidotransferase type-1 domain. The active-site Nucleophile is the Cys87. Catalysis depends on residues His173 and Glu175. The 189-residue stretch at 199–387 (WRPGDMVSEL…LGVPRELIWK (189 aa)) folds into the GMPS ATP-PPase domain. An ATP-binding site is contributed by 226–232 (SGGVDST).

The enzyme catalyses XMP + L-glutamine + ATP + H2O = GMP + L-glutamate + AMP + diphosphate + 2 H(+). It participates in purine metabolism; GMP biosynthesis; GMP from XMP (L-Gln route): step 1/1. Its function is as follows. Catalyzes the synthesis of GMP from XMP. This is GMP synthase [glutamine-hydrolyzing] (guaA) from Aeropyrum pernix (strain ATCC 700893 / DSM 11879 / JCM 9820 / NBRC 100138 / K1).